The following is a 275-amino-acid chain: Light-independent protochlorophyllide reductase iron-sulfur ATP-binding protein (275 aa).

Residues 12–17 (GIGKST) and Lys41 each bind ATP. Ser16 serves as a coordination point for Mg(2+). Positions 97 and 131 each coordinate [4Fe-4S] cluster. An ATP-binding site is contributed by 182 to 183 (NR).

It belongs to the NifH/BchL/ChlL family. As to quaternary structure, homodimer. Protochlorophyllide reductase is composed of three subunits; BchL, BchN and BchB. [4Fe-4S] cluster serves as cofactor.

The catalysed reaction is chlorophyllide a + oxidized 2[4Fe-4S]-[ferredoxin] + 2 ADP + 2 phosphate = protochlorophyllide a + reduced 2[4Fe-4S]-[ferredoxin] + 2 ATP + 2 H2O. The protein operates within porphyrin-containing compound metabolism; bacteriochlorophyll biosynthesis (light-independent). In terms of biological role, component of the dark-operative protochlorophyllide reductase (DPOR) that uses Mg-ATP and reduced ferredoxin to reduce ring D of protochlorophyllide (Pchlide) to form chlorophyllide a (Chlide). This reaction is light-independent. The L component serves as a unique electron donor to the NB-component of the complex, and binds Mg-ATP. This chain is Light-independent protochlorophyllide reductase iron-sulfur ATP-binding protein, found in Chlorobium phaeovibrioides (strain DSM 265 / 1930) (Prosthecochloris vibrioformis (strain DSM 265)).